The primary structure comprises 57 residues: Peptide BmKa1 (57 aa).

The first 22 residues, 1-22 (MKPRVFFLLFLLVAAMIETGES), serve as a signal peptide directing secretion. Composition is skewed to acidic residues over residues 20–29 (GESEENEEGS) and 45–57 (VDNE…GDSD). A disordered region spans residues 20–57 (GESEENEEGSNESGKSTEAKNTDASVDNEDSDIDGDSD).

Belongs to the non-disulfide-bridged peptide (NDBP) superfamily. Expressed by the venom gland.

The protein resides in the secreted. In Olivierus martensii (Manchurian scorpion), this protein is Peptide BmKa1.